The sequence spans 20 residues: Cytochrome P450IIB (20 aa).

This sequence belongs to the cytochrome P450 family. Heme is required as a cofactor.

It is found in the endoplasmic reticulum membrane. It localises to the microsome membrane. It catalyses the reaction an organic molecule + reduced [NADPH--hemoprotein reductase] + O2 = an alcohol + oxidized [NADPH--hemoprotein reductase] + H2O + H(+). Functionally, cytochromes P450 are a group of heme-thiolate monooxygenases. In liver microsomes, this enzyme is involved in an NADPH-dependent electron transport pathway. This isozyme is active upon P.nitroanisole, aniline, D-benzphetamine, delta(9)-tetrahydrocannabinol (THC) and strychnine. This chain is Cytochrome P450IIB, found in Cavia porcellus (Guinea pig).